Reading from the N-terminus, the 288-residue chain is 4-hydroxy-tetrahydrodipicolinate synthase (288 aa).

Residue Thr42 participates in pyruvate binding. The active-site Proton donor/acceptor is the Tyr129. The Schiff-base intermediate with substrate role is filled by Lys158. Ile200 contacts pyruvate.

Belongs to the DapA family. Homotetramer; dimer of dimers.

The protein resides in the cytoplasm. It catalyses the reaction L-aspartate 4-semialdehyde + pyruvate = (2S,4S)-4-hydroxy-2,3,4,5-tetrahydrodipicolinate + H2O + H(+). It functions in the pathway amino-acid biosynthesis; L-lysine biosynthesis via DAP pathway; (S)-tetrahydrodipicolinate from L-aspartate: step 3/4. Catalyzes the condensation of (S)-aspartate-beta-semialdehyde [(S)-ASA] and pyruvate to 4-hydroxy-tetrahydrodipicolinate (HTPA). This chain is 4-hydroxy-tetrahydrodipicolinate synthase, found in Thermosipho melanesiensis (strain DSM 12029 / CIP 104789 / BI429).